The sequence spans 193 residues: Potassium-transporting ATPase KdpC subunit (193 aa).

Residues 14 to 34 form a helical membrane-spanning segment; sequence ITFTFLVLCGLVYPLIVTGIA.

The protein belongs to the KdpC family. As to quaternary structure, the system is composed of three essential subunits: KdpA, KdpB and KdpC.

It is found in the cell membrane. Functionally, part of the high-affinity ATP-driven potassium transport (or Kdp) system, which catalyzes the hydrolysis of ATP coupled with the electrogenic transport of potassium into the cytoplasm. This subunit acts as a catalytic chaperone that increases the ATP-binding affinity of the ATP-hydrolyzing subunit KdpB by the formation of a transient KdpB/KdpC/ATP ternary complex. The polypeptide is Potassium-transporting ATPase KdpC subunit (Bacillus cereus (strain AH820)).